Consider the following 184-residue polypeptide: Ras protein let-60 (184 aa).

10–17 is a binding site for GTP; it reads GDGGVGKS. The short motif at 32 to 40 is the Effector region element; the sequence is YDPTIEDSY. GTP-binding positions include 57 to 61 and 116 to 119; these read DTAGQ and NKCD. Cysteine methyl ester is present on cysteine 181. Residue cysteine 181 is the site of S-farnesyl cysteine attachment. The propeptide at 182–184 is removed in mature form; sequence QIM.

The protein belongs to the small GTPase superfamily. Ras family. Interacts with soc-2. Interacts (in GTP-bound form) with plc-1 (via Ras-associating domain 1). As to expression, expressed in body wall muscles and in the nervous system including ganglion, nerve ring dorsal and ventral nerve cords, motor neurons and sensory tail neurons.

The protein resides in the cell membrane. It catalyses the reaction GTP + H2O = GDP + phosphate + H(+). In terms of biological role, GTP-binding protein with GTPase activity. The level of let-60 controls the switch between vulval and hypodermal cell fates during C.elegans vulval induction. May stimulate the guanine nucleotide exchange factor (GEF) activity of rap-1. May induce nuclear condensation. In Caenorhabditis elegans, this protein is Ras protein let-60.